Consider the following 127-residue polypeptide: Small ribosomal subunit protein bS6 (127 aa).

Residues 104–127 (QGAEKGKSSRKEKVAAEAEASEEA) are disordered. Positions 107 to 119 (EKGKSSRKEKVAA) are enriched in basic and acidic residues.

The protein belongs to the bacterial ribosomal protein bS6 family.

Binds together with bS18 to 16S ribosomal RNA. This Coxiella burnetii (strain CbuG_Q212) (Coxiella burnetii (strain Q212)) protein is Small ribosomal subunit protein bS6.